Consider the following 302-residue polypeptide: tRNA-cytidine(32) 2-sulfurtransferase (302 aa).

The PP-loop motif motif lies at 45–50; sequence SGGKDS. Positions 120, 123, and 211 each coordinate [4Fe-4S] cluster.

It belongs to the TtcA family. Homodimer. It depends on Mg(2+) as a cofactor. [4Fe-4S] cluster is required as a cofactor.

It is found in the cytoplasm. It catalyses the reaction cytidine(32) in tRNA + S-sulfanyl-L-cysteinyl-[cysteine desulfurase] + AH2 + ATP = 2-thiocytidine(32) in tRNA + L-cysteinyl-[cysteine desulfurase] + A + AMP + diphosphate + H(+). It participates in tRNA modification. In terms of biological role, catalyzes the ATP-dependent 2-thiolation of cytidine in position 32 of tRNA, to form 2-thiocytidine (s(2)C32). The sulfur atoms are provided by the cysteine/cysteine desulfurase (IscS) system. The sequence is that of tRNA-cytidine(32) 2-sulfurtransferase from Aeromonas hydrophila subsp. hydrophila (strain ATCC 7966 / DSM 30187 / BCRC 13018 / CCUG 14551 / JCM 1027 / KCTC 2358 / NCIMB 9240 / NCTC 8049).